The sequence spans 120 residues: Ig heavy chain V region 36-65 (120 aa).

In terms of domain architecture, Ig-like spans Val1–Gly111.

This chain is Ig heavy chain V region 36-65, found in Mus musculus (Mouse).